Consider the following 105-residue polypeptide: Large ribosomal subunit protein uL24 (105 aa).

It belongs to the universal ribosomal protein uL24 family. As to quaternary structure, part of the 50S ribosomal subunit.

In terms of biological role, one of two assembly initiator proteins, it binds directly to the 5'-end of the 23S rRNA, where it nucleates assembly of the 50S subunit. Its function is as follows. One of the proteins that surrounds the polypeptide exit tunnel on the outside of the subunit. This chain is Large ribosomal subunit protein uL24, found in Methylococcus capsulatus (strain ATCC 33009 / NCIMB 11132 / Bath).